The sequence spans 545 residues: Glucans biosynthesis protein G (545 aa).

The N-terminal stretch at methionine 1 to alanine 34 is a signal peptide. Residues lysine 38–asparagine 60 are disordered.

It belongs to the OpgD/OpgG family.

Its subcellular location is the periplasm. It functions in the pathway glycan metabolism; osmoregulated periplasmic glucan (OPG) biosynthesis. In terms of biological role, involved in the biosynthesis of osmoregulated periplasmic glucans (OPGs). The sequence is that of Glucans biosynthesis protein G from Shewanella sp. (strain MR-7).